The sequence spans 228 residues: Phosphoribosylformylglycinamidine synthase subunit PurQ (228 aa).

The Glutamine amidotransferase type-1 domain maps to 4–226 (AVVVFPGSNC…VNYWRETHVV (223 aa)). Cysteine 86 (nucleophile) is an active-site residue. Residues histidine 195 and glutamate 197 contribute to the active site.

In terms of assembly, part of the FGAM synthase complex composed of 1 PurL, 1 PurQ and 2 PurS subunits.

It is found in the cytoplasm. The enzyme catalyses N(2)-formyl-N(1)-(5-phospho-beta-D-ribosyl)glycinamide + L-glutamine + ATP + H2O = 2-formamido-N(1)-(5-O-phospho-beta-D-ribosyl)acetamidine + L-glutamate + ADP + phosphate + H(+). It carries out the reaction L-glutamine + H2O = L-glutamate + NH4(+). Its pathway is purine metabolism; IMP biosynthesis via de novo pathway; 5-amino-1-(5-phospho-D-ribosyl)imidazole from N(2)-formyl-N(1)-(5-phospho-D-ribosyl)glycinamide: step 1/2. Functionally, part of the phosphoribosylformylglycinamidine synthase complex involved in the purines biosynthetic pathway. Catalyzes the ATP-dependent conversion of formylglycinamide ribonucleotide (FGAR) and glutamine to yield formylglycinamidine ribonucleotide (FGAM) and glutamate. The FGAM synthase complex is composed of three subunits. PurQ produces an ammonia molecule by converting glutamine to glutamate. PurL transfers the ammonia molecule to FGAR to form FGAM in an ATP-dependent manner. PurS interacts with PurQ and PurL and is thought to assist in the transfer of the ammonia molecule from PurQ to PurL. The chain is Phosphoribosylformylglycinamidine synthase subunit PurQ from Geobacillus kaustophilus (strain HTA426).